We begin with the raw amino-acid sequence, 156 residues long: MENRERAGAGAVGSAGSLGLRVGQAVFSSASLLFMSVGVEFFSYTAFCFLVTIMGLVIPWSCTLAMIDVYSILVGCPLRVPGVMVIVVIGDWVLAILSLAAASSSAAVIDLLLQFHGSHCSPRFCGRYQLSAMMAFLSWFLTAASSLFNLWFIASR.

At 1–21 (MENRERAGAGAVGSAGSLGLR) the chain is on the cytoplasmic side. A helical transmembrane segment spans residues 22-42 (VGQAVFSSASLLFMSVGVEFF). Residues 43-46 (SYTA) are Extracellular-facing. Residues 47-67 (FCFLVTIMGLVIPWSCTLAMI) form a helical membrane-spanning segment. Topologically, residues 68–81 (DVYSILVGCPLRVP) are cytoplasmic. Residues 82-102 (GVMVIVVIGDWVLAILSLAAA) traverse the membrane as a helical segment. The Extracellular segment spans residues 103–132 (SSSAAVIDLLLQFHGSHCSPRFCGRYQLSA). Residues 133–153 (MMAFLSWFLTAASSLFNLWFI) form a helical membrane-spanning segment. Residues 154–156 (ASR) lie on the Cytoplasmic side of the membrane.

Belongs to the Casparian strip membrane proteins (CASP) family. As to quaternary structure, homodimer and heterodimers.

The protein resides in the cell membrane. The chain is CASP-like protein 5C1 from Oryza sativa subsp. japonica (Rice).